The chain runs to 314 residues: Cytochrome b558/566 subunit B (314 aa).

8 helical membrane-spanning segments follow: residues 47-67 (LLLV…LIVS), 76-96 (SLIP…IPNY), 102-122 (LYSL…EGLI), 127-147 (LSIL…ASIL), 155-175 (LFIS…AYVI), 186-206 (YIAI…ENII), 233-253 (HITL…TSLI), and 264-284 (FLII…IYML).

The protein localises to the cell membrane. This Saccharolobus solfataricus (strain ATCC 35092 / DSM 1617 / JCM 11322 / P2) (Sulfolobus solfataricus) protein is Cytochrome b558/566 subunit B (cbsB).